A 212-amino-acid chain; its full sequence is Large ribosomal subunit protein bL25 (212 aa).

Positions 181 to 212 are disordered; sequence LSEPKEEVIEEDVEEVSADVPTVSETEEEDAE. Residues 188–197 show a composition bias toward acidic residues; sequence VIEEDVEEVS.

Belongs to the bacterial ribosomal protein bL25 family. CTC subfamily. Part of the 50S ribosomal subunit; part of the 5S rRNA/L5/L18/L25 subcomplex. Contacts the 5S rRNA. Binds to the 5S rRNA independently of L5 and L18.

Functionally, this is one of the proteins that binds to the 5S RNA in the ribosome where it forms part of the central protuberance. The chain is Large ribosomal subunit protein bL25 from Finegoldia magna (strain ATCC 29328 / DSM 20472 / WAL 2508) (Peptostreptococcus magnus).